The sequence spans 197 residues: NADH-quinone oxidoreductase subunit C (197 aa).

This sequence belongs to the complex I 30 kDa subunit family. In terms of assembly, NDH-1 is composed of 14 different subunits. Subunits NuoB, C, D, E, F, and G constitute the peripheral sector of the complex.

Its subcellular location is the cell inner membrane. The enzyme catalyses a quinone + NADH + 5 H(+)(in) = a quinol + NAD(+) + 4 H(+)(out). Its function is as follows. NDH-1 shuttles electrons from NADH, via FMN and iron-sulfur (Fe-S) centers, to quinones in the respiratory chain. The immediate electron acceptor for the enzyme in this species is believed to be ubiquinone. Couples the redox reaction to proton translocation (for every two electrons transferred, four hydrogen ions are translocated across the cytoplasmic membrane), and thus conserves the redox energy in a proton gradient. The protein is NADH-quinone oxidoreductase subunit C of Rickettsia prowazekii (strain Madrid E).